A 434-amino-acid polypeptide reads, in one-letter code: Histidinol dehydrogenase (434 aa).

Residues Tyr130, Gln188, and Asn211 each contribute to the NAD(+) site. Substrate-binding residues include Ser237, Gln259, and His262. The Zn(2+) site is built by Gln259 and His262. Active-site proton acceptor residues include Glu326 and His327. Residues His327, Asp360, Glu414, and His419 each contribute to the substrate site. Asp360 serves as a coordination point for Zn(2+). Residue His419 participates in Zn(2+) binding.

Belongs to the histidinol dehydrogenase family. Homodimer. It depends on Zn(2+) as a cofactor.

The catalysed reaction is L-histidinol + 2 NAD(+) + H2O = L-histidine + 2 NADH + 3 H(+). It functions in the pathway amino-acid biosynthesis; L-histidine biosynthesis; L-histidine from 5-phospho-alpha-D-ribose 1-diphosphate: step 9/9. In terms of biological role, catalyzes the sequential NAD-dependent oxidations of L-histidinol to L-histidinaldehyde and then to L-histidine. The protein is Histidinol dehydrogenase of Shigella boydii serotype 4 (strain Sb227).